The sequence spans 504 residues: Glycerol kinase (504 aa).

Position 13 (Thr13) interacts with ADP. ATP is bound by residues Thr13, Thr14, and Ser15. Thr13 contributes to the sn-glycerol 3-phosphate binding site. Arg17 lines the ADP pocket. Sn-glycerol 3-phosphate is bound by residues Arg83, Glu84, and Tyr135. Residues Arg83, Glu84, and Tyr135 each coordinate glycerol. His231 is subject to Phosphohistidine; by HPr. Asp245 is a binding site for sn-glycerol 3-phosphate. Residues Asp245 and Gln246 each contribute to the glycerol site. Thr267 and Gly310 together coordinate ADP. The ATP site is built by Thr267, Gly310, Gln314, and Gly411. ADP is bound by residues Gly411 and Asn415.

It belongs to the FGGY kinase family. In terms of assembly, homotetramer and homodimer (in equilibrium). Post-translationally, the phosphoenolpyruvate-dependent sugar phosphotransferase system (PTS), including enzyme I, and histidine-containing protein (HPr) are required for the phosphorylation, which leads to the activation of the enzyme.

The catalysed reaction is glycerol + ATP = sn-glycerol 3-phosphate + ADP + H(+). The protein operates within polyol metabolism; glycerol degradation via glycerol kinase pathway; sn-glycerol 3-phosphate from glycerol: step 1/1. Activated by phosphorylation and inhibited by fructose 1,6-bisphosphate (FBP). Key enzyme in the regulation of glycerol uptake and metabolism. Catalyzes the phosphorylation of glycerol to yield sn-glycerol 3-phosphate. The polypeptide is Glycerol kinase (Pediococcus pentosaceus (strain ATCC 25745 / CCUG 21536 / LMG 10740 / 183-1w)).